Reading from the N-terminus, the 38-residue chain is Large ribosomal subunit protein bL36 (38 aa).

The protein belongs to the bacterial ribosomal protein bL36 family.

This chain is Large ribosomal subunit protein bL36, found in Wigglesworthia glossinidia brevipalpis.